The chain runs to 174 residues: NADH-ubiquinone oxidoreductase chain 6 (174 aa).

The next 5 helical transmembrane spans lie at 1–21, 24–44, 46–66, 86–106, and 151–171; these read MTYV…GFSS, SPIY…GIVL, FGGS…MLVV, VMIL…VVYM, and WLMV…IEIT.

This sequence belongs to the complex I subunit 6 family. Core subunit of respiratory chain NADH dehydrogenase (Complex I) which is composed of 45 different subunits.

Its subcellular location is the mitochondrion inner membrane. The catalysed reaction is a ubiquinone + NADH + 5 H(+)(in) = a ubiquinol + NAD(+) + 4 H(+)(out). Functionally, core subunit of the mitochondrial membrane respiratory chain NADH dehydrogenase (Complex I) which catalyzes electron transfer from NADH through the respiratory chain, using ubiquinone as an electron acceptor. Essential for the catalytic activity and assembly of complex I. This is NADH-ubiquinone oxidoreductase chain 6 (MT-ND6) from Oryctolagus cuniculus (Rabbit).